The primary structure comprises 310 residues: MPDHPLSSGVAFSHVPVLAETLMQVLSEQPPILWQNTAVIDATLGGGGHSKLILERFPGVRLVGLDQDPSARAAAASRLEPFLDRVQIVPVNFAAFEPPEPVSLVLADLGVSSPQLDVASRGFSFRLDGPLDMRMNPVAGGETAEEMIARLDVNALADLIYAFGEERLSRRIARRIKADLEAEGAYAGTAALAYAVAGCYPPKARRGRIHPATRTFQALRIAVNDELGVLDRLLQTAPGWLKPGGVLAIISFHSLEDRRVKTAFLQEERLERVTRKPFMASEQEQADNPRSRSAKLRIARRRPDTARSGP.

Residues 47–49 (GGH), Asp-66, Phe-93, Asp-108, and Gln-115 contribute to the S-adenosyl-L-methionine site. A disordered region spans residues 275–310 (RKPFMASEQEQADNPRSRSAKLRIARRRPDTARSGP). Basic and acidic residues predominate over residues 301 to 310 (RRPDTARSGP).

The protein belongs to the methyltransferase superfamily. RsmH family.

It localises to the cytoplasm. The enzyme catalyses cytidine(1402) in 16S rRNA + S-adenosyl-L-methionine = N(4)-methylcytidine(1402) in 16S rRNA + S-adenosyl-L-homocysteine + H(+). Its function is as follows. Specifically methylates the N4 position of cytidine in position 1402 (C1402) of 16S rRNA. This is Ribosomal RNA small subunit methyltransferase H from Synechococcus sp. (strain CC9311).